An 86-amino-acid polypeptide reads, in one-letter code: MNTTTSQIIIDNDMSNEVGTIMVITLCLVTIVITCYLLLQLVRWSFIVDIFRQIRTRCLQWTSRREFLQLDNMYYTNDSSVGVNTE.

This is an uncharacterized protein from Sus scrofa (Pig).